Reading from the N-terminus, the 271-residue chain is 3-methyl-2-oxobutanoate hydroxymethyltransferase (271 aa).

The Mg(2+) site is built by Asp-53 and Asp-92. Residues Asp-53–Ser-54, Asp-92, and Lys-120 contribute to the 3-methyl-2-oxobutanoate site. Position 122 (Glu-122) interacts with Mg(2+). The active-site Proton acceptor is the Glu-189.

Belongs to the PanB family. In terms of assembly, homodecamer; pentamer of dimers. Mg(2+) serves as cofactor.

It is found in the cytoplasm. It catalyses the reaction 3-methyl-2-oxobutanoate + (6R)-5,10-methylene-5,6,7,8-tetrahydrofolate + H2O = 2-dehydropantoate + (6S)-5,6,7,8-tetrahydrofolate. Its pathway is cofactor biosynthesis; (R)-pantothenate biosynthesis; (R)-pantoate from 3-methyl-2-oxobutanoate: step 1/2. Its function is as follows. Catalyzes the reversible reaction in which hydroxymethyl group from 5,10-methylenetetrahydrofolate is transferred onto alpha-ketoisovalerate to form ketopantoate. In Burkholderia multivorans (strain ATCC 17616 / 249), this protein is 3-methyl-2-oxobutanoate hydroxymethyltransferase.